Consider the following 488-residue polypeptide: Proline--tRNA ligase (488 aa).

Belongs to the class-II aminoacyl-tRNA synthetase family. ProS type 3 subfamily. Homodimer.

It is found in the cytoplasm. The catalysed reaction is tRNA(Pro) + L-proline + ATP = L-prolyl-tRNA(Pro) + AMP + diphosphate. In terms of biological role, catalyzes the attachment of proline to tRNA(Pro) in a two-step reaction: proline is first activated by ATP to form Pro-AMP and then transferred to the acceptor end of tRNA(Pro). The sequence is that of Proline--tRNA ligase from Borreliella burgdorferi (strain ZS7) (Borrelia burgdorferi).